We begin with the raw amino-acid sequence, 228 residues long: CD302 antigen (228 aa).

The signal sequence occupies residues 1–20 (MPHAALSSLVLLSLATAIVA). Residues 21-165 (DCPSSTWVQF…YDKKYLSDNH (145 aa)) are Extracellular-facing. The C-type lectin domain occupies 30–149 (FQGSCYAFLQ…CEISSVEGTL (120 aa)). An N-linked (GlcNAc...) asparagine glycan is attached at asparagine 107. The cysteines at positions 125 and 140 are disulfide-linked. The helical transmembrane segment at 166 to 186 (ILISTLVIASTVTLAVLGAII) threads the bilayer. Topologically, residues 187-228 (WFLYRRNARSGFTSFSPAPLSPYSDGCALVVAEEDEYAVQLD) are cytoplasmic.

The protein localises to the membrane. It localises to the cell projection. It is found in the filopodium. Its subcellular location is the cytoplasm. The protein resides in the cell cortex. The protein localises to the microvillus. Functionally, potential multifunctional C-type lectin receptor that may play roles in endocytosis and phagocytosis as well as in cell adhesion and migration. This Mus musculus (Mouse) protein is CD302 antigen (Cd302).